An 827-amino-acid polypeptide reads, in one-letter code: N-terminal kinase-like protein (827 aa).

The Protein kinase domain occupies 1–309 (MWFWSRDPAR…PEDFCRHKIL (309 aa)). 3 HEAT repeats span residues 345–383 (IIPV…VNAQ), 384–422 (IFPH…LNME), and 502–540 (VLPV…EDPS). A compositionally biased stretch (low complexity) spans 586 to 624 (DAAASEGASAPSTASEASKPDTAPSSSAPPAAASTAPTS). Positions 586-827 (DAAASEGASA…PLKLGVRKLD (242 aa)) are disordered. Residues 630-640 (EKGAPDNSLDR) show a composition bias toward basic and acidic residues. A compositionally biased stretch (acidic residues) spans 641 to 652 (WDDEDWGSLEDA). A compositionally biased stretch (basic and acidic residues) spans 667–678 (DWGHGKTQEKTV). Composition is skewed to polar residues over residues 679 to 690 (DFSSSRSKTKQV) and 737 to 746 (NWDTSGSSGR). Over residues 774-783 (GGDDNWESVE) the composition is skewed to acidic residues. A coiled-coil region spans residues 788–817 (LSKAEMARKKREERQKEIEAKRAERRAAKG). Residues 792-814 (EMARKKREERQKEIEAKRAERRA) show a composition bias toward basic and acidic residues.

It belongs to the protein kinase superfamily.

Its function is as follows. Regulates COPI-mediated retrograde protein traffic at the interface between the Golgi apparatus and the endoplasmic reticulum. Involved in the maintenance of the Golgi apparatus morphology. In Xenopus tropicalis (Western clawed frog), this protein is N-terminal kinase-like protein (scyl1).